Consider the following 932-residue polypeptide: Glycine dehydrogenase (decarboxylating) (932 aa).

Lysine 685 is subject to N6-(pyridoxal phosphate)lysine.

It belongs to the GcvP family. In terms of assembly, the glycine cleavage system is composed of four proteins: P, T, L and H. Pyridoxal 5'-phosphate serves as cofactor.

The enzyme catalyses N(6)-[(R)-lipoyl]-L-lysyl-[glycine-cleavage complex H protein] + glycine + H(+) = N(6)-[(R)-S(8)-aminomethyldihydrolipoyl]-L-lysyl-[glycine-cleavage complex H protein] + CO2. Its function is as follows. The glycine cleavage system catalyzes the degradation of glycine. The P protein binds the alpha-amino group of glycine through its pyridoxal phosphate cofactor; CO(2) is released and the remaining methylamine moiety is then transferred to the lipoamide cofactor of the H protein. The sequence is that of Glycine dehydrogenase (decarboxylating) from Brucella suis (strain ATCC 23445 / NCTC 10510).